Consider the following 238-residue polypeptide: Leucyl/phenylalanyl-tRNA--protein transferase (238 aa).

The protein belongs to the L/F-transferase family.

It localises to the cytoplasm. The enzyme catalyses N-terminal L-lysyl-[protein] + L-leucyl-tRNA(Leu) = N-terminal L-leucyl-L-lysyl-[protein] + tRNA(Leu) + H(+). The catalysed reaction is N-terminal L-arginyl-[protein] + L-leucyl-tRNA(Leu) = N-terminal L-leucyl-L-arginyl-[protein] + tRNA(Leu) + H(+). It catalyses the reaction L-phenylalanyl-tRNA(Phe) + an N-terminal L-alpha-aminoacyl-[protein] = an N-terminal L-phenylalanyl-L-alpha-aminoacyl-[protein] + tRNA(Phe). Functionally, functions in the N-end rule pathway of protein degradation where it conjugates Leu, Phe and, less efficiently, Met from aminoacyl-tRNAs to the N-termini of proteins containing an N-terminal arginine or lysine. The protein is Leucyl/phenylalanyl-tRNA--protein transferase of Psychromonas ingrahamii (strain DSM 17664 / CCUG 51855 / 37).